The primary structure comprises 480 residues: Beta-glucosidase A (480 aa).

E177 acts as the Proton donor in catalysis. The active-site Nucleophile is the E378.

This sequence belongs to the glycosyl hydrolase 1 family.

The enzyme catalyses Hydrolysis of terminal, non-reducing beta-D-glucosyl residues with release of beta-D-glucose.. The sequence is that of Beta-glucosidase A (bglA) from Enterobacter agglomerans (Erwinia herbicola).